A 99-amino-acid polypeptide reads, in one-letter code: Small ribosomal subunit protein cS23 (99 aa).

This sequence belongs to the chloroplast-specific ribosomal protein cS23 family. In terms of assembly, part of the 30S ribosomal subunit.

The protein localises to the plastid. It is found in the chloroplast. Its function is as follows. Probably a ribosomal protein or a ribosome-associated protein. The polypeptide is Small ribosomal subunit protein cS23 (Gracilaria tenuistipitata var. liui (Red alga)).